Consider the following 312-residue polypeptide: MNQTIKHISVMKKELIESLKIKKNGIYIDGTFGMGGHALSILKTIGREGRLYAIDRDPNSVFIGNQIKDKRFHIIHSNFSKILNYAKYNNIIGKVNGILFDLGTSSLQIENEKRGFSFKKNGPLDMRMNPHAGISASEWLFKSDINKIYFVLKNFGEERFSKRIAYAIKDYCKKKKINNTFELVDIIKKATPIKNKFKHPAKRTFQAIRIYINQELEEIKKGLENSLKILKPGGRLSIISFHSLEDRIVKNFMMKYSKKATVPYGLPITENKLETLRICKLKIINRIFPTQKEIEKNPRARSSVLRTAELKE.

S-adenosyl-L-methionine is bound by residues 35 to 37 (GGH), aspartate 55, phenylalanine 79, aspartate 101, and glutamine 108.

It belongs to the methyltransferase superfamily. RsmH family.

It localises to the cytoplasm. It carries out the reaction cytidine(1402) in 16S rRNA + S-adenosyl-L-methionine = N(4)-methylcytidine(1402) in 16S rRNA + S-adenosyl-L-homocysteine + H(+). Specifically methylates the N4 position of cytidine in position 1402 (C1402) of 16S rRNA. The chain is Ribosomal RNA small subunit methyltransferase H from Buchnera aphidicola subsp. Schizaphis graminum (strain Sg).